Reading from the N-terminus, the 600-residue chain is Beta-hexosaminidase (600 aa).

Positions 1-18 (MRISQICTVLSTVTSAVA) are cleaved as a signal peptide. Residues 19-96 (VGVNPLPAPR…PFPTPTAGAS (78 aa)) constitute a propeptide that is removed on maturation. T78 is a glycosylation site (O-linked (Man...) threonine). Residues S83 and S84 are each glycosylated (O-linked (Man...) serine). Residues D222 and H275 each act as charge relay system in the active site. Cysteines 290 and 351 form a disulfide. The N-linked (HexNAc...) asparagine glycan is linked to N318. E346 (charge relay system) is an active-site residue. An N-linked (GlcNAc...) asparagine glycan is attached at N353. Residue N387 is glycosylated (N-linked (HexNAc...) asparagine). A glycan (N-linked (GlcNAc...) asparagine) is linked at N428. An intrachain disulfide couples C448 to C483. N-linked (GlcNAc...) asparagine glycosylation is found at N500 and N525. An intrachain disulfide couples C583 to C590.

Belongs to the glycosyl hydrolase 20 family. In terms of assembly, homodimer. Oligosaccharide moieties may also take part in the dimerization. Dimerization is a pH-dependent reversible process. The individual catalytic cores dimerize and the catalytic core of one subunit in the active dimer interacts with the propeptide of the second subunit. Post-translationally, the precursor of the propeptide is intracellularly processed in the endoplasmic reticulum by a dibasic peptidase, different from Kex2, removing Lys-97--Arg-101 from the precursor producing the activated propeptide. The propeptide binds non-covalently to the catalytic domain. Propeptide binding is necessary for full activation of the enzyme, dimerization of the catalytic domain and secretion of the active enzyme. In terms of processing, O-glycosylated. O-glycosylation (O-mannosylation) at the C-terminus of the propeptide is necessary for full enzyme activity. N-glycosylated. N-glycosylation of the catalytic domain increases the stability and solubility of the enzyme, especially at low pH. Contains high mannose-type (M4-M11) N-glycans at the C-terminus. N-glycan deglycosylation does not affect enzyme activity.

It localises to the secreted. The catalysed reaction is Hydrolysis of terminal non-reducing N-acetyl-D-hexosamine residues in N-acetyl-beta-D-hexosaminides.. Its activity is regulated as follows. Activated by non-covalent binding of the propeptide to the catalytic domain. The concentration of the propeptide is regulated in the endoplasmic reticulum and the propeptide thus regulates the amount of the active enzyme at various stages of the growth cycle. The dimeric enzyme has about half of the maximal activity in the presence of one bound propeptide, but is fully active with two bound O-glycosylated propeptides. Inhibited by N-acetylglucosamine (NAG)-thiazoline. Selectively hydrolyzes GlcNAcbeta(1-&gt;4)GlcNAc (N,N'-diacetylchitobiose) and Gal-NAcbeta(1-&gt;4)GlcNAc, but not their C-2 epimers GlcNAcbeta(1-&gt;4)ManNAc or Gal-NAcbeta(1-&gt;4)ManNAc. However, hydrolyzes both GlcNAcbeta(1-&gt;6)GlcNAc and GlcNAcbeta(1-&gt;6)ManNAc. Part of the binary chitinolytic system. Involved in hydrolysis of chitobiose and higher chito-oligomers (produced from cell wall chitin by endochitinases), thus contributing to the formation of germ tubes, fruit-bodies and septa during hyphenation. Hydrolyzes synthetic substrate p-nitrophenyl-beta-N-acetyl-D-glucosaminide (pNP-GlcNAc). Hydrolyzes synthetic substrate p-nitrophenyl-beta-N-acetyl-D-galactosaminide (pNP-GalNAc). Hydrolyzes chromogenic substrate 4-nitrophenyl-2-acetamido-2-deoxyglucopyranoside. In Aspergillus oryzae (Yellow koji mold), this protein is Beta-hexosaminidase.